A 300-amino-acid chain; its full sequence is Acetylglutamate kinase (300 aa).

Substrate contacts are provided by residues 73–74, arginine 95, and asparagine 197; that span reads GG.

This sequence belongs to the acetylglutamate kinase family. ArgB subfamily.

The protein resides in the cytoplasm. It catalyses the reaction N-acetyl-L-glutamate + ATP = N-acetyl-L-glutamyl 5-phosphate + ADP. Its pathway is amino-acid biosynthesis; L-arginine biosynthesis; N(2)-acetyl-L-ornithine from L-glutamate: step 2/4. Catalyzes the ATP-dependent phosphorylation of N-acetyl-L-glutamate. The sequence is that of Acetylglutamate kinase from Bordetella petrii (strain ATCC BAA-461 / DSM 12804 / CCUG 43448).